Here is a 572-residue protein sequence, read N- to C-terminus: Glutathione hydrolase 5 proenzyme (572 aa).

Over Met1–Arg6 the chain is Cytoplasmic. A helical; Signal-anchor for type II membrane protein transmembrane segment spans residues Thr7–Leu29. The Extracellular segment spans residues Pro30–Tyr572. Asn98 carries an N-linked (GlcNAc...) asparagine glycan. L-glutamate is bound at residue Arg110. Residues Asn185, Asn194, Asn204, Asn277, Asn303, Asn347, and Asn377 are each glycosylated (N-linked (GlcNAc...) asparagine). Residue Thr388 is the Nucleophile of the active site. L-glutamate is bound by residues Thr406, Glu427, and Ser453–Ser454.

It belongs to the gamma-glutamyltransferase family. As to quaternary structure, heterodimer composed of the light and heavy chains. The active site is located in the light chain. In terms of processing, cleaved by autocatalysis into a large and a small subunit. Post-translationally, glycosylated. Widely expressed, but at low level, except in the airway epithelial cells. Detected in brain, heart, kidney, liver, lung, spleen, testis and trachea.

The protein localises to the membrane. It catalyses the reaction glutathione + H2O = L-cysteinylglycine + L-glutamate. The catalysed reaction is an S-substituted glutathione + H2O = an S-substituted L-cysteinylglycine + L-glutamate. The enzyme catalyses leukotriene C4 + H2O = leukotriene D4 + L-glutamate. It carries out the reaction S-[(2E,6E,10E)-geranylgeranyl]-L-glutathione + H2O = S-[(2E,6E,10E)-geranylgeranyl]-L-cysteinylglycine + L-glutamate. It catalyses the reaction an N-terminal (5-L-glutamyl)-[peptide] + an alpha-amino acid = 5-L-glutamyl amino acid + an N-terminal L-alpha-aminoacyl-[peptide]. Its pathway is lipid metabolism; leukotriene D4 biosynthesis. It functions in the pathway sulfur metabolism; glutathione metabolism. Inhibited by serine-borate. Functionally, cleaves the gamma-glutamyl bond of extracellular glutathione tripeptide (gamma-Glu-Cys-Gly) and certain glutathione conjugates. Hydrolyzes glutathione releasing L-Glu and Cys-Gly dipeptide which is further metabolized to maintain extracellular cysteine levels but also to provide cysteine necessary for intracellular glutathione synthesis. Among glutathione-S-conjugates metabolizes leukotriene C4 (LTC4) and S-geranylgeranyl-glutathione (GGG), but is inactive toward gamma-glutamyl leucine. Converts extracellular LTC4 to LTD4 during acute inflammatory response. Acts as a negative regulator of GGG bioactivity. GGT5 (via GGG catabolism) and ABCC1 (via extracellular transport) establish GGG gradients within lymphoid tissues to position P2RY8-positive lymphocytes at germinal centers in lymphoid follicles and restrict their chemotactic transmigration from blood vessels to bone marrow parenchyma. The transpeptidation reaction, i.e. the transfer of gamma-glutamyl moiety to an acceptor molecule to yield a new gamma-glutamyl compound requires high concentration of dipeptide acceptor and is considered nonphysiological. The protein is Glutathione hydrolase 5 proenzyme (Ggt5) of Rattus norvegicus (Rat).